The chain runs to 325 residues: Acetyl-coenzyme A carboxylase carboxyl transferase subunit alpha (325 aa).

A CoA carboxyltransferase C-terminal domain is found at 35–292; the sequence is EIEKLEARLT…DRVLRASLKQ (258 aa).

Belongs to the AccA family. As to quaternary structure, acetyl-CoA carboxylase is a heterohexamer composed of biotin carboxyl carrier protein (AccB), biotin carboxylase (AccC) and two subunits each of ACCase subunit alpha (AccA) and ACCase subunit beta (AccD).

The protein localises to the cytoplasm. It catalyses the reaction N(6)-carboxybiotinyl-L-lysyl-[protein] + acetyl-CoA = N(6)-biotinyl-L-lysyl-[protein] + malonyl-CoA. It participates in lipid metabolism; malonyl-CoA biosynthesis; malonyl-CoA from acetyl-CoA: step 1/1. Component of the acetyl coenzyme A carboxylase (ACC) complex. First, biotin carboxylase catalyzes the carboxylation of biotin on its carrier protein (BCCP) and then the CO(2) group is transferred by the carboxyltransferase to acetyl-CoA to form malonyl-CoA. The sequence is that of Acetyl-coenzyme A carboxylase carboxyl transferase subunit alpha from Geobacillus thermodenitrificans (strain NG80-2).